Consider the following 375-residue polypeptide: Chaperone protein DnaJ (375 aa).

A J domain is found at 5 to 70 (DYYEVLGVSR…EKRARYDRFG (66 aa)). The CR-type zinc finger occupies 136–214 (GDEVTLRIPK…CRGAGQVQDI (79 aa)). Zn(2+)-binding residues include Cys-149, Cys-152, Cys-166, Cys-169, Cys-188, Cys-191, Cys-202, and Cys-205. CXXCXGXG motif repeat units follow at residues 149–156 (CPDCSGSG), 166–173 (CPQCGGSG), 188–195 (CSACRGEG), and 202–209 (CPRCRGAG).

Belongs to the DnaJ family. Homodimer. Zn(2+) serves as cofactor.

It localises to the cytoplasm. Its function is as follows. Participates actively in the response to hyperosmotic and heat shock by preventing the aggregation of stress-denatured proteins and by disaggregating proteins, also in an autonomous, DnaK-independent fashion. Unfolded proteins bind initially to DnaJ; upon interaction with the DnaJ-bound protein, DnaK hydrolyzes its bound ATP, resulting in the formation of a stable complex. GrpE releases ADP from DnaK; ATP binding to DnaK triggers the release of the substrate protein, thus completing the reaction cycle. Several rounds of ATP-dependent interactions between DnaJ, DnaK and GrpE are required for fully efficient folding. Also involved, together with DnaK and GrpE, in the DNA replication of plasmids through activation of initiation proteins. This Oleidesulfovibrio alaskensis (strain ATCC BAA-1058 / DSM 17464 / G20) (Desulfovibrio alaskensis) protein is Chaperone protein DnaJ.